Reading from the N-terminus, the 328-residue chain is Versiconal hemiacetal acetate esterase (328 aa).

The short motif at 82–84 is the Involved in the stabilization of the negatively charged intermediate by the formation of the oxyanion hole element; that stretch reads HGG. Active-site residues include Ser-156, Asp-260, and His-290.

It belongs to the 'GDXG' lipolytic enzyme family.

It catalyses the reaction (2S,3S)-versiconal hemiacetal acetate + H2O = (2S-3S)-versiconal hemiacetal + acetate + H(+). The catalysed reaction is (3S)-versiconol acetate + H2O = (S)-versiconol + acetate + H(+). It functions in the pathway mycotoxin biosynthesis. Functionally, versiconal hemiacetal acetate esterase; part of the fragmented gene cluster that mediates the biosynthesis of dothistromin (DOTH), a polyketide toxin very similar in structure to the aflatoxin precursor, versicolorin B. The first step of the pathway is the conversion of acetate to norsolorinic acid (NOR) and requires the fatty acid synthase subunits hexA and hexB, as well as the polyketide synthase pksA. PksA combines a hexanoyl starter unit and 7 malonyl-CoA extender units to synthesize the precursor NOR. The hexanoyl starter unit is provided to the acyl-carrier protein (ACP) domain by the fungal fatty acid synthase hexA/hexB. The second step is the conversion of NOR to averantin (AVN) and requires the norsolorinic acid ketoreductase nor1, which catalyzes the dehydration of norsolorinic acid to form (1'S)-averantin. The cytochrome P450 monooxygenase avnA then catalyzes the hydroxylation of AVN to 5'hydroxyaverantin (HAVN). The next step is performed by adhA that transforms HAVN to averufin (AVF). Averufin might then be converted to hydroxyversicolorone by cypX and avfA. Hydroxyversicolorone is further converted versiconal hemiacetal acetate (VHA) by moxY. VHA is then the substrate for the versiconal hemiacetal acetate esterase est1 to yield versiconal (VAL). Versicolorin B synthase vbsA then converts VAL to versicolorin B (VERB) by closing the bisfuran ring. Then, the activity of the versicolorin B desaturase verB leads to versicolorin A (VERA). DotB, a predicted chloroperoxidase, may perform epoxidation of the A-ring of VERA. Alternatively, a cytochrome P450, such as cypX or avnA could catalyze this step. It is also possible that another, uncharacterized, cytochrome P450 enzyme is responsible for this step. Opening of the epoxide could potentially be achieved by the epoxide hydrolase epoA. However, epoA seems not to be required for DOTH biosynthesis, but other epoxide hydrolases may have the ability to complement this hydrolysis. Alternatively, opening of the epoxide ring could be achieved non-enzymatically. The next step is the deoxygenation of ring A to yield the 5,8-dihydroxyanthraquinone which is most likely catalyzed by the NADPH dehydrogenase encoded by ver1. The last stages of DOTH biosynthesis are proposed to involve hydroxylation of the bisfuran. OrdB and norB might have oxidative roles here. An alternative possibility is that cytochrome P450 monoogenases such as avnA and cypX might perform these steps in addition to previously proposed steps. The chain is Versiconal hemiacetal acetate esterase from Dothistroma septosporum (strain NZE10 / CBS 128990) (Red band needle blight fungus).